The primary structure comprises 351 residues: Methylthioribose-1-phosphate isomerase (351 aa).

Residues 51 to 53 (RGA), R94, and Q199 contribute to the substrate site. The Proton donor role is filled by D240. A substrate-binding site is contributed by 250–251 (NK).

This sequence belongs to the EIF-2B alpha/beta/delta subunits family. MtnA subfamily. As to quaternary structure, homodimer.

The catalysed reaction is 5-(methylsulfanyl)-alpha-D-ribose 1-phosphate = 5-(methylsulfanyl)-D-ribulose 1-phosphate. The protein operates within amino-acid biosynthesis; L-methionine biosynthesis via salvage pathway; L-methionine from S-methyl-5-thio-alpha-D-ribose 1-phosphate: step 1/6. Functionally, catalyzes the interconversion of methylthioribose-1-phosphate (MTR-1-P) into methylthioribulose-1-phosphate (MTRu-1-P). The chain is Methylthioribose-1-phosphate isomerase from Bacillus thuringiensis subsp. konkukian (strain 97-27).